The primary structure comprises 632 residues: Probable extracellular metalloproteinase 2 (632 aa).

The N-terminal stretch at 1–19 (MHGLLLAGLAAALPLGVAG) is a signal peptide. The propeptide occupies 20-244 (LPARQQSGLS…VHNVVDYVAS (225 aa)). Residues N81 and N270 are each glycosylated (N-linked (GlcNAc...) asparagine). H429 serves as a coordination point for Zn(2+). E430 is an active-site residue. A Zn(2+)-binding site is contributed by H433.

Belongs to the peptidase M36 family. Requires Zn(2+) as cofactor.

The protein resides in the secreted. In terms of biological role, secreted metalloproteinase probably acting as a virulence factor. This Arthroderma benhamiae (strain ATCC MYA-4681 / CBS 112371) (Trichophyton mentagrophytes) protein is Probable extracellular metalloproteinase 2 (MEP2).